The primary structure comprises 47 residues: Small, acid-soluble spore protein K (47 aa).

Positions 1–47 (MRNKAHGFPHRISFDGEPDRAKHASKRANGTINTKPQERMHQANPDQ) are disordered. Positions 12–22 (ISFDGEPDRAK) are enriched in basic and acidic residues.

The protein belongs to the SspK family.

The protein localises to the spore core. The sequence is that of Small, acid-soluble spore protein K from Halalkalibacterium halodurans (strain ATCC BAA-125 / DSM 18197 / FERM 7344 / JCM 9153 / C-125) (Bacillus halodurans).